Here is a 292-residue protein sequence, read N- to C-terminus: 33 kDa chaperonin (292 aa).

Intrachain disulfides connect C230-C232 and C263-C266.

This sequence belongs to the HSP33 family. Post-translationally, under oxidizing conditions two disulfide bonds are formed involving the reactive cysteines. Under reducing conditions zinc is bound to the reactive cysteines and the protein is inactive.

Its subcellular location is the cytoplasm. In terms of biological role, redox regulated molecular chaperone. Protects both thermally unfolding and oxidatively damaged proteins from irreversible aggregation. Plays an important role in the bacterial defense system toward oxidative stress. The chain is 33 kDa chaperonin from Salmonella paratyphi A (strain ATCC 9150 / SARB42).